The chain runs to 388 residues: Flavin-dependent monooxygenase (388 aa).

FAD-binding positions include 26–27 (PV) and 45–48 (YERD). Residue Arg54 coordinates NADPH. Residues Asp61, Arg117, and Leu139 each coordinate FAD. Positions 192 and 213 each coordinate substrate. FAD contacts are provided by residues Asp311 and 321 to 324 (GQGV).

The protein belongs to the aromatic-ring hydroxylase family. TetX subfamily. In terms of assembly, monomer. The cofactor is FAD.

It is found in the cytoplasm. It carries out the reaction a tetracycline + NADPH + O2 + H(+) = an 11a-hydroxytetracycline + NADP(+) + H2O. It catalyses the reaction tetracycline + NADPH + O2 + H(+) = 11a-hydroxytetracycline + NADP(+) + H2O. The enzyme catalyses tigecycline + NADPH + O2 + H(+) = 11a-hydroxytigecycline + NADP(+) + H2O. The catalysed reaction is oxytetracycline + NADPH + O2 + H(+) = 11a-hydroxy-oxytetracycline + NADP(+) + H2O. Anhydrotetracycline, a poor substrate, prevents tetracycline degradation in vitro. Its function is as follows. An FAD-requiring monooxygenase active on tetracycline antibiotic derivatives, which leads to their inactivation. Hydroxylates carbon 11a of oxytetracycline and tigecycline. Acts on many tetracycline analogs (chlorotetracycline, demeclocycline, doxycycline, minocycline, oxytetracyclinee), probably by monooxygenization. Tigecycline, a new generation tetracycline antibiotic, is rendered less effective against E.coli by this monooxygenation, is much weaker at inhibiting translation in vitro and binds Mg(2+) considerably less well. Expression in E.coli BW25113 reduces its growth rate about 5%. The reaction probably proceeds by FAD reduction by NADPH and, second, hydroxylation of antibiotic in a ping-pong mechanism. Degrades chlortetracycline, probably by monooxygenation. Slowly oxidizes anhydrotetracycline, the final substrate in tetracycline biosynthesis. This is Flavin-dependent monooxygenase from Bacteroides thetaiotaomicron.